The following is a 159-amino-acid chain: Pathogenesis-related leaf protein 4 (159 aa).

The N-terminal stretch at methionine 1–alanine 24 is a signal peptide. Glutamine 25 is subject to Pyrrolidone carboxylic acid. In terms of domain architecture, SCP spans leucine 32–tyrosine 147. Disulfide bonds link cysteine 68/cysteine 136, cysteine 109/cysteine 115, and cysteine 131/cysteine 145.

Belongs to the CRISP family.

Functionally, probably involved in the defense reaction of plants against pathogens. This chain is Pathogenesis-related leaf protein 4, found in Solanum lycopersicum (Tomato).